Consider the following 415-residue polypeptide: MKSYLVGGAVRDALLGLPVKDKDWVVVGATPAEMLALGYQQVGKDFPVFLHPQTHEEYALARTERKSGQGYTGFTCYAAPDVTLEQDLQRRDLTINAIAQDDSGEFIDPYHGRDDLKARLLRHVSPAFNEDPLRVLRVARFAARYAHLGFRIAPETLSLMREMAENGELEHLTAERVWKETESALTTRNPQIYFLMLHECGALKVLFPEVDKLFGVPAPAKWHPEIDTGIHTLMTLAMAAMLSPAVDVRFAALCHDLGKGLTPPHLWPRHHGHGPAGVRLVAQVCERLRVPNDIRDLAKLVAEFHDLIHTFPILKPRTIVGLFDSIDAWRKPQRVEQIAITSEADVRGRTGFEAKDYPQARLLREAWEVARAVSPKEVVEAGFTGPAIREELTKRRIRAVAAWKEERCPQPAAEG.

Positions 8 and 11 each coordinate ATP. CTP-binding residues include Gly-8 and Arg-11. Asp-21 and Asp-23 together coordinate Mg(2+). ATP contacts are provided by Arg-91, Arg-137, and Arg-140. Residues Arg-91, Arg-137, and Arg-140 each coordinate CTP. In terms of domain architecture, HD spans 228–329 (TGIHTLMTLA…VGLFDSIDAW (102 aa)).

Belongs to the tRNA nucleotidyltransferase/poly(A) polymerase family. Bacterial CCA-adding enzyme type 1 subfamily. As to quaternary structure, monomer. Can also form homodimers and oligomers. Mg(2+) serves as cofactor. Requires Ni(2+) as cofactor.

It catalyses the reaction a tRNA precursor + 2 CTP + ATP = a tRNA with a 3' CCA end + 3 diphosphate. The enzyme catalyses a tRNA with a 3' CCA end + 2 CTP + ATP = a tRNA with a 3' CCACCA end + 3 diphosphate. In terms of biological role, catalyzes the addition and repair of the essential 3'-terminal CCA sequence in tRNAs without using a nucleic acid template. Adds these three nucleotides in the order of C, C, and A to the tRNA nucleotide-73, using CTP and ATP as substrates and producing inorganic pyrophosphate. tRNA 3'-terminal CCA addition is required both for tRNA processing and repair. Also involved in tRNA surveillance by mediating tandem CCA addition to generate a CCACCA at the 3' terminus of unstable tRNAs. While stable tRNAs receive only 3'-terminal CCA, unstable tRNAs are marked with CCACCA and rapidly degraded. The chain is Multifunctional CCA protein from Cronobacter sakazakii (strain ATCC BAA-894) (Enterobacter sakazakii).